Consider the following 300-residue polypeptide: Centromere protein O (300 aa).

2 coiled-coil regions span residues 18–42 (LAHLERLETQVSRSRKQSEELQSVQ) and 83–109 (NQTVEINEQEALEEKLENVKAILQAYH). A Phosphoserine modification is found at Ser35.

Belongs to the CENP-O/MCM21 family. Component of the CENPA-CAD complex, composed of CENPI, CENPK, CENPL, CENPO, CENPP, CENPQ, CENPR and CENPS. The CENPA-CAD complex interacts with the CENPA-NAC complex, at least composed of CENPA, CENPC, CENPH, CENPM, CENPN, CENPT and CENPU.

The protein resides in the nucleus. It is found in the chromosome. Its subcellular location is the centromere. It localises to the kinetochore. In terms of biological role, component of the CENPA-CAD (nucleosome distal) complex, a complex recruited to centromeres which is involved in assembly of kinetochore proteins, mitotic progression and chromosome segregation. May be involved in incorporation of newly synthesized CENPA into centromeres via its interaction with the CENPA-NAC complex. Modulates the kinetochore-bound levels of NDC80 complex. In Homo sapiens (Human), this protein is Centromere protein O (CENPO).